A 344-amino-acid polypeptide reads, in one-letter code: Ras association domain-containing protein 1 (344 aa).

Residue Ser2 is modified to N-acetylserine. The residue at position 2 (Ser2) is a Phosphoserine. The tract at residues 2–119 (SGEPELIELR…DLGWEPAVER (118 aa)) is mediates interaction with E4F1. At Arg36 the chain carries Omega-N-methylarginine. The Phorbol-ester/DAG-type zinc-finger motif lies at 51-105 (GHRFQPAGPATHTWCDLCGDFIWGVVRKGLQCARLSADCKFTCHYRCRALVCLDC). The segment covering 179-189 (SVPSSKKPPSL) has biased composition (low complexity). A disordered region spans residues 179 to 203 (SVPSSKKPPSLQDARRGPGRGTSVR). In terms of domain architecture, Ras-associating spans 198-292 (RGTSVRRRTS…LSFVLKENDS (95 aa)). An SARAH domain is found at 294–341 (EVNWDAFSMPELHNFLRILQREEEEHLRQILQKYSYCRQKIQEALHAC). The interval 315–318 (EEEE) is MOAP1-binding.

In terms of assembly, interacts with MAP1S. Interacts with XPA. Binds to the N-terminal of CDC20 during prometaphase. Binds to STK3/MST2 and STK4/MST1. Recruited to the TNFRSF1A and TNFRSF10A complexes in response to their respective cognate ligand, after internalization. Can self-associate. Part of a complex with MDM2, DAXX, RASSF1 and USP7. Interacts with ECM2. As to quaternary structure, interacts with MOAP1. Interacts with E4F1. Interacts with RSSF5 and probably associates with HRAS via a RSSF1 isoform A-RSSF5 heterodimer. Interacts (via C-terminus) with DAXX (via N-terminus); the interaction is independent of MDM2 and TP53. Interacts (via N-terminus) with MDM2 (via C-terminus); the interaction is independent of TP53. Interacts with RAB39A. Interacts with RAB39B; the interaction is weak. Interacts (via N-terminus) with DAXX. Interacts with RAB39B; the interaction is strong. Does not interact with RAB39A. In terms of assembly, interacts (via N-terminus) with DAXX. In terms of tissue distribution, isoform A and isoform C are ubiquitously expressed in all tissues tested, however isoform A is absent in many corresponding cancer cell lines. Isoform B is mainly expressed in hematopoietic cells.

Its subcellular location is the cytoplasm. It localises to the cytoskeleton. The protein localises to the microtubule organizing center. It is found in the centrosome. The protein resides in the spindle. Its subcellular location is the spindle pole. It localises to the nucleus. Its function is as follows. Potential tumor suppressor. Required for death receptor-dependent apoptosis. Mediates activation of STK3/MST2 and STK4/MST1 during Fas-induced apoptosis by preventing their dephosphorylation. When associated with MOAP1, promotes BAX conformational change and translocation to mitochondrial membranes in response to TNF and TNFSF10 stimulation. Isoform A interacts with CDC20, an activator of the anaphase-promoting complex, APC, resulting in the inhibition of APC activity and mitotic progression. Inhibits proliferation by negatively regulating cell cycle progression at the level of G1/S-phase transition by regulating accumulation of cyclin D1 protein. Isoform C has been shown not to perform these roles, no function has been identified for this isoform. Isoform A disrupts interactions among MDM2, DAXX and USP7, thus contributing to the efficient activation of TP53 by promoting MDM2 self-ubiquitination in cell-cycle checkpoint control in response to DNA damage. The polypeptide is Ras association domain-containing protein 1 (Homo sapiens (Human)).